The primary structure comprises 435 residues: 3-phosphoshikimate 1-carboxyvinyltransferase (435 aa).

Residues Lys21, Ser22, and Arg26 each coordinate 3-phosphoshikimate. Lys21 contributes to the phosphoenolpyruvate binding site. Phosphoenolpyruvate-binding residues include Gly100 and Arg128. 3-phosphoshikimate is bound by residues Ser171, Ser172, Gln173, Ser199, Asp313, and Lys340. Gln173 contributes to the phosphoenolpyruvate binding site. Asp313 functions as the Proton acceptor in the catalytic mechanism. Residues Arg344, Arg386, and Lys412 each contribute to the phosphoenolpyruvate site.

The protein belongs to the EPSP synthase family. Monomer.

The protein localises to the cytoplasm. It catalyses the reaction 3-phosphoshikimate + phosphoenolpyruvate = 5-O-(1-carboxyvinyl)-3-phosphoshikimate + phosphate. It participates in metabolic intermediate biosynthesis; chorismate biosynthesis; chorismate from D-erythrose 4-phosphate and phosphoenolpyruvate: step 6/7. Functionally, catalyzes the transfer of the enolpyruvyl moiety of phosphoenolpyruvate (PEP) to the 5-hydroxyl of shikimate-3-phosphate (S3P) to produce enolpyruvyl shikimate-3-phosphate and inorganic phosphate. This Clostridium novyi (strain NT) protein is 3-phosphoshikimate 1-carboxyvinyltransferase.